The chain runs to 268 residues: DNA repair protein RecO (268 aa).

The protein belongs to the RecO family.

Its function is as follows. Involved in DNA repair and RecF pathway recombination. This Parasynechococcus marenigrum (strain WH8102) protein is DNA repair protein RecO.